The primary structure comprises 491 residues: Cytochrome P450 2B4 (491 aa).

Position 128 is a phosphoserine; by PKA (Ser128). Position 436 (Cys436) interacts with heme.

Belongs to the cytochrome P450 family. Requires heme as cofactor.

Its subcellular location is the endoplasmic reticulum membrane. The protein localises to the microsome membrane. The catalysed reaction is an organic molecule + reduced [NADPH--hemoprotein reductase] + O2 = an alcohol + oxidized [NADPH--hemoprotein reductase] + H2O + H(+). Its function is as follows. Cytochromes P450 are a group of heme-thiolate monooxygenases. In liver microsomes, this enzyme is involved in an NADPH-dependent electron transport pathway. It oxidizes a variety of structurally unrelated compounds, including steroids, fatty acids, and xenobiotics. In the epoxidation of arachidonic acid it has a unique preference for the 5,6-olefin. In Oryctolagus cuniculus (Rabbit), this protein is Cytochrome P450 2B4 (CYP2B4).